Reading from the N-terminus, the 142-residue chain is Virulence-associated membrane protein 1 (142 aa).

The signal sequence occupies residues 1-20 (MRGILVALTAALIFCSLTPA). A helical membrane pass occupies residues 59–79 (IAIAVGTALVTLVSAGVGGML).

As to quaternary structure, monomer.

Its subcellular location is the membrane. Its function is as follows. During infection, may play a role in establishing and maintaining biotrophy; the formation of a tight interaction zone between the host and the pathogen. This chain is Virulence-associated membrane protein 1, found in Mycosarcoma maydis (Corn smut fungus).